The sequence spans 253 residues: Zinc finger protein JAGGED (253 aa).

The tract at residues 1–46 (MRHEENYLDLNNLPDDFSKDGNKQALEEGSSSGQRKKKGSKEGKDE) is disordered. Positions 16 to 26 (DFSKDGNKQAL) are enriched in basic and acidic residues. The segment at 51-73 (YECRFCSLKFCKSQALGGHMNRH) adopts a C2H2-type zinc-finger fold.

Interacts with GATA18/HAN. Expressed in the emerging leaf, sepal, petal, stamen and carpel primordia. Not expressed in the apical shoot meristem (SAM).

It is found in the nucleus. Controls the morphogenesis of lateral organs. Functions in lateral organ shape and is sufficient to induce proliferation and growth of lateral organ tissue. Is necessary and sufficient for bract formation, but its expression is excluded from the cryptic bract, which could be a cause of bractless flowers in Arabidopsis. Participates with FIL and YAB3 in regulating valve margin development. Functions with JGL to define stamen and carpel shape. Functions with AS1 and AS2 in the sepal and petal primordia to repress boundary-specifying genes for normal development of the organs. This Arabidopsis thaliana (Mouse-ear cress) protein is Zinc finger protein JAGGED (JAG).